The sequence spans 464 residues: ATP synthase subunit beta (464 aa).

G152–T159 is a binding site for ATP.

Belongs to the ATPase alpha/beta chains family. As to quaternary structure, F-type ATPases have 2 components, CF(1) - the catalytic core - and CF(0) - the membrane proton channel. CF(1) has five subunits: alpha(3), beta(3), gamma(1), delta(1), epsilon(1). CF(0) has three main subunits: a(1), b(2) and c(9-12). The alpha and beta chains form an alternating ring which encloses part of the gamma chain. CF(1) is attached to CF(0) by a central stalk formed by the gamma and epsilon chains, while a peripheral stalk is formed by the delta and b chains.

Its subcellular location is the cell membrane. The enzyme catalyses ATP + H2O + 4 H(+)(in) = ADP + phosphate + 5 H(+)(out). In terms of biological role, produces ATP from ADP in the presence of a proton gradient across the membrane. The catalytic sites are hosted primarily by the beta subunits. The protein is ATP synthase subunit beta of Ureaplasma parvum serovar 3 (strain ATCC 27815 / 27 / NCTC 11736).